Reading from the N-terminus, the 319-residue chain is HPr kinase/phosphorylase (319 aa).

Residues histidine 137 and lysine 158 contribute to the active site. Glycine 152–serine 159 lines the ATP pocket. Serine 159 provides a ligand contact to Mg(2+). The active-site Proton acceptor; for phosphorylation activity. Proton donor; for dephosphorylation activity is the aspartate 176. The tract at residues methionine 201–asparagine 210 is important for the catalytic mechanism of both phosphorylation and dephosphorylation. A Mg(2+)-binding site is contributed by glutamate 202. The active site involves arginine 243. Positions proline 264–arginine 269 are important for the catalytic mechanism of dephosphorylation.

Belongs to the HPrK/P family. As to quaternary structure, homohexamer. Mg(2+) is required as a cofactor.

It carries out the reaction [HPr protein]-L-serine + ATP = [HPr protein]-O-phospho-L-serine + ADP + H(+). The catalysed reaction is [HPr protein]-O-phospho-L-serine + phosphate + H(+) = [HPr protein]-L-serine + diphosphate. In terms of biological role, catalyzes the ATP- as well as the pyrophosphate-dependent phosphorylation of a specific serine residue in HPr, a phosphocarrier protein of the phosphoenolpyruvate-dependent sugar phosphotransferase system (PTS). HprK/P also catalyzes the pyrophosphate-producing, inorganic phosphate-dependent dephosphorylation (phosphorolysis) of seryl-phosphorylated HPr (P-Ser-HPr). In Treponema pallidum subsp. pallidum (strain SS14), this protein is HPr kinase/phosphorylase.